Reading from the N-terminus, the 69-residue chain is Large ribosomal subunit protein uL29 (69 aa).

The protein belongs to the universal ribosomal protein uL29 family.

The sequence is that of Large ribosomal subunit protein uL29 from Granulibacter bethesdensis (strain ATCC BAA-1260 / CGDNIH1).